The chain runs to 290 residues: Pyridoxal kinase PdxY (290 aa).

Residues S12 and 47–48 each bind substrate; that span reads TQ. Residues D114, E151, K184, and 211–214 each bind ATP; that span reads RPLL. D225 serves as a coordination point for substrate.

This sequence belongs to the pyridoxine kinase family. PdxY subfamily. As to quaternary structure, homodimer. It depends on Mg(2+) as a cofactor.

It carries out the reaction pyridoxal + ATP = pyridoxal 5'-phosphate + ADP + H(+). Its pathway is cofactor metabolism; pyridoxal 5'-phosphate salvage; pyridoxal 5'-phosphate from pyridoxal: step 1/1. Pyridoxal kinase involved in the salvage pathway of pyridoxal 5'-phosphate (PLP). Catalyzes the phosphorylation of pyridoxal to PLP. The protein is Pyridoxal kinase PdxY of Pseudomonas fluorescens (strain SBW25).